Reading from the N-terminus, the 318-residue chain is Homoserine kinase (318 aa).

97 to 107 (PIGSGLGSSAC) lines the ATP pocket.

Belongs to the GHMP kinase family. Homoserine kinase subfamily.

It is found in the cytoplasm. It carries out the reaction L-homoserine + ATP = O-phospho-L-homoserine + ADP + H(+). The protein operates within amino-acid biosynthesis; L-threonine biosynthesis; L-threonine from L-aspartate: step 4/5. Its function is as follows. Catalyzes the ATP-dependent phosphorylation of L-homoserine to L-homoserine phosphate. This Vibrio cholerae serotype O1 (strain ATCC 39541 / Classical Ogawa 395 / O395) protein is Homoserine kinase.